The chain runs to 125 residues: Large ribosomal subunit protein bL12 (125 aa).

The protein belongs to the bacterial ribosomal protein bL12 family. As to quaternary structure, homodimer. Part of the ribosomal stalk of the 50S ribosomal subunit. Forms a multimeric L10(L12)X complex, where L10 forms an elongated spine to which 2 to 4 L12 dimers bind in a sequential fashion. Binds GTP-bound translation factors.

In terms of biological role, forms part of the ribosomal stalk which helps the ribosome interact with GTP-bound translation factors. Is thus essential for accurate translation. In Hyphomonas neptunium (strain ATCC 15444), this protein is Large ribosomal subunit protein bL12.